We begin with the raw amino-acid sequence, 331 residues long: Probable cytosolic iron-sulfur protein assembly protein Ciao1 (331 aa).

7 WD repeats span residues 12-51 (GHKG…WTTK), 57-96 (GHKR…ATLE), 97-136 (GHEN…EFEC), 142-181 (AHSQ…SDWD), 188-227 (SHTS…NEAG), 246-285 (LHTR…KRDA), and 297-331 (AHEQ…KLQE).

The protein belongs to the WD repeat CIA1 family.

Functionally, essential component of the cytosolic iron-sulfur (Fe/S) protein assembly machinery. Required for the maturation of extramitochondrial Fe/S proteins. The sequence is that of Probable cytosolic iron-sulfur protein assembly protein Ciao1 from Drosophila mojavensis (Fruit fly).